Reading from the N-terminus, the 110-residue chain is Endoribonuclease SymE (110 aa).

The region spanning 29–74 (SSYPEYTRIPAITLKGQWLEDAGFTTGTQVDVRVMNGCIVLTAQQP) is the SpoVT-AbrB domain.

This sequence belongs to the SymE family.

The protein localises to the cytoplasm. Functionally, involved in the degradation and recycling of damaged RNA. It is itself a target for degradation by the ATP-dependent protease Lon. The chain is Endoribonuclease SymE from Salmonella choleraesuis (strain SC-B67).